The following is a 242-amino-acid chain: Biosynthetic peptidoglycan transglycosylase (242 aa).

Residues 19 to 39 (ILAALAVFWGGGIALFSVVPV) form a helical membrane-spanning segment.

It belongs to the glycosyltransferase 51 family.

It is found in the cell inner membrane. It catalyses the reaction [GlcNAc-(1-&gt;4)-Mur2Ac(oyl-L-Ala-gamma-D-Glu-L-Lys-D-Ala-D-Ala)](n)-di-trans,octa-cis-undecaprenyl diphosphate + beta-D-GlcNAc-(1-&gt;4)-Mur2Ac(oyl-L-Ala-gamma-D-Glu-L-Lys-D-Ala-D-Ala)-di-trans,octa-cis-undecaprenyl diphosphate = [GlcNAc-(1-&gt;4)-Mur2Ac(oyl-L-Ala-gamma-D-Glu-L-Lys-D-Ala-D-Ala)](n+1)-di-trans,octa-cis-undecaprenyl diphosphate + di-trans,octa-cis-undecaprenyl diphosphate + H(+). It functions in the pathway cell wall biogenesis; peptidoglycan biosynthesis. Peptidoglycan polymerase that catalyzes glycan chain elongation from lipid-linked precursors. In Salmonella paratyphi B (strain ATCC BAA-1250 / SPB7), this protein is Biosynthetic peptidoglycan transglycosylase.